A 409-amino-acid chain; its full sequence is Putative competence-damage inducible protein (409 aa).

This sequence belongs to the CinA family.

This is Putative competence-damage inducible protein from Clostridium botulinum (strain 657 / Type Ba4).